Here is a 504-residue protein sequence, read N- to C-terminus: Maturase K (504 aa).

It belongs to the intron maturase 2 family. MatK subfamily.

It is found in the plastid. It localises to the chloroplast. Its function is as follows. Usually encoded in the trnK tRNA gene intron. Probably assists in splicing its own and other chloroplast group II introns. The sequence is that of Maturase K from Arabidopsis lyrata (Lyre-leaved rock-cress).